Reading from the N-terminus, the 327-residue chain is Serine/threonine-protein phosphatase 4 regulatory subunit ppfr-4 (327 aa).

Residues 141 to 185 are a coiled coil; that stretch reads KLAVEEIRRLKLERHKKKQELKMAELRIQKQLEAVSIDEQNLREL. The segment at 271-327 is disordered; it reads KFGHNPQNAPQSSAPAGAEAQESEEEVDDDEARAKAMRWDEYKDDHRRGWGNMHNKG. The segment covering 275 to 284 has biased composition (polar residues); the sequence is NPQNAPQSSA. Acidic residues predominate over residues 291 to 301; it reads QESEEEVDDDE. A compositionally biased stretch (basic and acidic residues) spans 302–318; that stretch reads ARAKAMRWDEYKDDHRR.

In terms of assembly, serine/threonine-protein phosphatase 4 (PP4) occurs in different assemblies of the catalytic and one or more regulatory subunits. The catalytic subunit is likely to be pph-4.1.

In terms of biological role, probable regulatory subunit of serine/threonine-protein phosphatase PP4 which may play a role in meiosis and embryonic mitosis. Probably in association with catalytic subunit pph-4.1, regulates microtubule severing during oocyte meiosis II by dephosphorylating and likely activating mei-1, a component of the katanin microtubule severing complex. This Caenorhabditis elegans protein is Serine/threonine-protein phosphatase 4 regulatory subunit ppfr-4.